The sequence spans 50 residues: U2-ctenitoxin-Pk1a (50 aa).

5 disulfide bridges follow: Cys-1-Cys-15, Cys-8-Cys-21, Cys-12-Cys-47, Cys-14-Cys-31, and Cys-23-Cys-29.

Expressed by the venom gland.

It localises to the secreted. In terms of biological role, insecticidal neurotoxin that reversibly inhibits the N-methyl-D-aspartate (NMDA)-subtype of ionotropic glutamate receptor (GRIN) and inhibits inactivation of insect sodium channels (Nav). In vivo, is highly toxic to insects. This is U2-ctenitoxin-Pk1a from Phoneutria keyserlingi (Brazilian wandering spider).